A 69-amino-acid chain; its full sequence is Fumarase D (69 aa).

The protein belongs to the FumD family.

It carries out the reaction (S)-malate = fumarate + H2O. In terms of biological role, in vitro catalyzes the addition of water to fumarate, forming malate. Cannot catalyze the reverse reaction. Cannot use the cis-isomer maleate as substrate. The protein is Fumarase D of Shigella flexneri.